We begin with the raw amino-acid sequence, 375 residues long: Killer cell immunoglobulin-like receptor 2DL5B (375 aa).

Residues 1-21 (MSLMVVSMACVGFFLLQGAWT) form the signal peptide. At 22 to 238 (HEGGQDKPLL…PSSKTGIRRH (217 aa)) the chain is on the extracellular side. Ig-like C2-type domains lie at 42–102 (GGHV…HPRS) and 137–200 (GENV…LHDS). Intrachain disulfides connect Cys-49–Cys-95 and Cys-144–Cys-193. Residues 213 to 233 (VSVTGNSSSSSSSPTEPSSKT) are disordered. An N-linked (GlcNAc...) asparagine glycan is attached at Asn-218. The segment covering 219–231 (SSSSSSSPTEPSS) has biased composition (low complexity). A helical membrane pass occupies residues 239 to 259 (LHILIGTSVAIILFIILFFFL). Residues 260-375 (LHCCCSNKKN…ASSHVPAAGI (116 aa)) lie on the Cytoplasmic side of the membrane. The interval 334–375 (AKPRSLSPAHKHHSQALRGSSRETTALSQNRVASSHVPAAGI) is disordered. Positions 355-366 (RETTALSQNRVA) are enriched in polar residues.

The protein belongs to the immunoglobulin superfamily.

Its subcellular location is the cell membrane. Its function is as follows. Receptor on natural killer (NK) cells for HLA-C alleles. Inhibits the activity of NK cells thus preventing cell lysis. The sequence is that of Killer cell immunoglobulin-like receptor 2DL5B (KIR2DL5B) from Homo sapiens (Human).